The chain runs to 81 residues: Acyl carrier protein (81 aa).

The 79-residue stretch at 1–79 (MDREEILQKI…EAVDYVVEHQ (79 aa)) folds into the Carrier domain. Residue Ser-39 is modified to O-(pantetheine 4'-phosphoryl)serine.

It belongs to the acyl carrier protein (ACP) family. 4'-phosphopantetheine is transferred from CoA to a specific serine of apo-ACP by AcpS. This modification is essential for activity because fatty acids are bound in thioester linkage to the sulfhydryl of the prosthetic group.

The protein resides in the cytoplasm. The protein operates within lipid metabolism; fatty acid biosynthesis. Functionally, carrier of the growing fatty acid chain in fatty acid biosynthesis. In Rubrobacter xylanophilus (strain DSM 9941 / JCM 11954 / NBRC 16129 / PRD-1), this protein is Acyl carrier protein.